We begin with the raw amino-acid sequence, 364 residues long: Long-wave-sensitive opsin 1 (364 aa).

Topologically, residues 1–52 are extracellular; it reads MAHTWGPQRLAGGQPQANFEESTQGSIFTYTNSNSTRDPFEGPNYHIAPRWV. An O-linked (GlcNAc) serine glycan is attached at S22. N-linked (GlcNAc...) asparagine glycosylation occurs at N34. Residues 53–77 form a helical membrane-spanning segment; sequence YHLTSAWMVFVVIASVFTNGLVLAA. Over 78-89 the chain is Cytoplasmic; that stretch reads TMRFKKLRHPLN. The helical transmembrane segment at 90 to 115 threads the bilayer; it reads WILVNLAIADLAETIIASTISVVNQM. Topologically, residues 116–129 are extracellular; sequence YGYFVLGHPLCVVE. Residues C126 and C203 are joined by a disulfide bond. The helical transmembrane segment at 130 to 149 threads the bilayer; the sequence is GYTVSLCGITGLWSLAIISW. Residues 150 to 168 are Cytoplasmic-facing; the sequence is ERWMVVCKPFGNVRFDAKL. The helical transmembrane segment at 169–192 threads the bilayer; it reads ATAGIAFSWIWAAVWTAPPIFGWS. Residues 193–218 are Extracellular-facing; the sequence is RYWPHGLKTSCGPDVFSGSSYPGVQS. A helical transmembrane segment spans residues 219–246; sequence YMIVLMITCCFIPLSVIILCYLQVWLAI. Over 247–268 the chain is Cytoplasmic; the sequence is RAVAKQQKESESTQKAEKEVTR. Residues 269–292 form a helical membrane-spanning segment; that stretch reads MVMVMIFAYCLCWGPYTFFACFAA. At 293–300 the chain is on the extracellular side; it reads AHPGYAFH. Residues 301–325 traverse the membrane as a helical segment; it reads PLVAALPAYFAKSATIYNPIIYVFM. The residue at position 312 (K312) is an N6-(retinylidene)lysine. The Cytoplasmic portion of the chain corresponds to 326–364; it reads NRQFRNCILQLFGKKVDDSSELSSVSKTEASSVSSVSPA.

It belongs to the G-protein coupled receptor 1 family. Opsin subfamily. In terms of processing, phosphorylated on some or all of the serine and threonine residues present in the C-terminal region. In terms of tissue distribution, the three color pigments are found in the cone photoreceptor cells.

Its subcellular location is the membrane. In terms of biological role, visual pigments are the light-absorbing molecules that mediate vision. They consist of an apoprotein, opsin, covalently linked to cis-retinal. This chain is Long-wave-sensitive opsin 1 (OPN1LW), found in Capra hircus (Goat).